A 498-amino-acid polypeptide reads, in one-letter code: ATP synthase subunit beta, chloroplastic (498 aa).

172–179 (GGAGVGKT) is a binding site for ATP.

This sequence belongs to the ATPase alpha/beta chains family. As to quaternary structure, F-type ATPases have 2 components, CF(1) - the catalytic core - and CF(0) - the membrane proton channel. CF(1) has five subunits: alpha(3), beta(3), gamma(1), delta(1), epsilon(1). CF(0) has four main subunits: a(1), b(1), b'(1) and c(9-12).

It is found in the plastid. The protein localises to the chloroplast thylakoid membrane. The catalysed reaction is ATP + H2O + 4 H(+)(in) = ADP + phosphate + 5 H(+)(out). In terms of biological role, produces ATP from ADP in the presence of a proton gradient across the membrane. The catalytic sites are hosted primarily by the beta subunits. The polypeptide is ATP synthase subunit beta, chloroplastic (Trochodendron aralioides (Wheel tree)).